The following is a 496-amino-acid chain: L-arabinose isomerase (496 aa).

Residues glutamate 306, glutamate 331, histidine 348, and histidine 447 each coordinate Mn(2+).

Belongs to the arabinose isomerase family. The cofactor is Mn(2+).

It catalyses the reaction beta-L-arabinopyranose = L-ribulose. It participates in carbohydrate degradation; L-arabinose degradation via L-ribulose; D-xylulose 5-phosphate from L-arabinose (bacterial route): step 1/3. Its function is as follows. Catalyzes the conversion of L-arabinose to L-ribulose. The sequence is that of L-arabinose isomerase from Geobacillus thermodenitrificans (strain NG80-2).